The primary structure comprises 390 residues: Probable tRNA pseudouridine synthase D (390 aa).

The Nucleophile role is filled by D93. Residues 166-353 (HVLNYFGIQR…YGTRRKLITP (188 aa)) enclose the TRUD domain.

The protein belongs to the pseudouridine synthase TruD family.

It carries out the reaction uridine(13) in tRNA = pseudouridine(13) in tRNA. In terms of biological role, could be responsible for synthesis of pseudouridine from uracil-13 in transfer RNAs. In Methanococcus vannielii (strain ATCC 35089 / DSM 1224 / JCM 13029 / OCM 148 / SB), this protein is Probable tRNA pseudouridine synthase D.